The following is a 239-amino-acid chain: Aspartate/glutamate leucyltransferase (239 aa).

The protein belongs to the R-transferase family. Bpt subfamily.

It is found in the cytoplasm. It catalyses the reaction N-terminal L-glutamyl-[protein] + L-leucyl-tRNA(Leu) = N-terminal L-leucyl-L-glutamyl-[protein] + tRNA(Leu) + H(+). The enzyme catalyses N-terminal L-aspartyl-[protein] + L-leucyl-tRNA(Leu) = N-terminal L-leucyl-L-aspartyl-[protein] + tRNA(Leu) + H(+). Functions in the N-end rule pathway of protein degradation where it conjugates Leu from its aminoacyl-tRNA to the N-termini of proteins containing an N-terminal aspartate or glutamate. The polypeptide is Aspartate/glutamate leucyltransferase (Campylobacter jejuni subsp. jejuni serotype O:6 (strain 81116 / NCTC 11828)).